The chain runs to 130 residues: Sec-independent protein translocase protein TatB (130 aa).

The helical transmembrane segment at 1–21 (MFDIGFTELTLIFIIGLVVLG) threads the bilayer. 2 stretches are compositionally biased toward basic and acidic residues: residues 57-67 (QDMQERMEKQM) and 111-130 (PSDK…RRHD). The tract at residues 57-130 (QDMQERMEKQ…NHDQDSRRHD (74 aa)) is disordered.

Belongs to the TatB family. As to quaternary structure, the Tat system comprises two distinct complexes: a TatABC complex, containing multiple copies of TatA, TatB and TatC subunits, and a separate TatA complex, containing only TatA subunits. Substrates initially bind to the TatABC complex, which probably triggers association of the separate TatA complex to form the active translocon.

The protein resides in the cell inner membrane. In terms of biological role, part of the twin-arginine translocation (Tat) system that transports large folded proteins containing a characteristic twin-arginine motif in their signal peptide across membranes. Together with TatC, TatB is part of a receptor directly interacting with Tat signal peptides. TatB may form an oligomeric binding site that transiently accommodates folded Tat precursor proteins before their translocation. This Alcanivorax borkumensis (strain ATCC 700651 / DSM 11573 / NCIMB 13689 / SK2) protein is Sec-independent protein translocase protein TatB.